A 510-amino-acid chain; its full sequence is Histidine ammonia-lyase (510 aa).

Positions 143–145 form a cross-link, 5-imidazolinone (Ala-Gly); it reads ASG. Serine 144 bears the 2,3-didehydroalanine (Ser) mark.

Belongs to the PAL/histidase family. Post-translationally, contains an active site 4-methylidene-imidazol-5-one (MIO), which is formed autocatalytically by cyclization and dehydration of residues Ala-Ser-Gly.

The protein resides in the cytoplasm. It carries out the reaction L-histidine = trans-urocanate + NH4(+). The protein operates within amino-acid degradation; L-histidine degradation into L-glutamate; N-formimidoyl-L-glutamate from L-histidine: step 1/3. This is Histidine ammonia-lyase from Shewanella sediminis (strain HAW-EB3).